The chain runs to 433 residues: 3-phosphoshikimate 1-carboxyvinyltransferase (433 aa).

3 residues coordinate 3-phosphoshikimate: Lys-15, Ser-16, and Arg-20. Lys-15 is a binding site for phosphoenolpyruvate. 2 residues coordinate phosphoenolpyruvate: Gly-96 and Arg-124. 3-phosphoshikimate is bound by residues Ser-169, Gln-171, Asp-318, and Lys-345. Gln-171 contacts phosphoenolpyruvate. Asp-318 acts as the Proton acceptor in catalysis. 2 residues coordinate phosphoenolpyruvate: Arg-349 and Arg-393.

Belongs to the EPSP synthase family. As to quaternary structure, monomer.

Its subcellular location is the cytoplasm. The catalysed reaction is 3-phosphoshikimate + phosphoenolpyruvate = 5-O-(1-carboxyvinyl)-3-phosphoshikimate + phosphate. It functions in the pathway metabolic intermediate biosynthesis; chorismate biosynthesis; chorismate from D-erythrose 4-phosphate and phosphoenolpyruvate: step 6/7. Catalyzes the transfer of the enolpyruvyl moiety of phosphoenolpyruvate (PEP) to the 5-hydroxyl of shikimate-3-phosphate (S3P) to produce enolpyruvyl shikimate-3-phosphate and inorganic phosphate. The chain is 3-phosphoshikimate 1-carboxyvinyltransferase from Chlorobium phaeovibrioides (strain DSM 265 / 1930) (Prosthecochloris vibrioformis (strain DSM 265)).